We begin with the raw amino-acid sequence, 273 residues long: Large ribosomal subunit protein uL2 (273 aa).

Disordered regions lie at residues 35 to 54 (DSKS…TRHI) and 222 to 273 (GMAM…RRNK). Over residues 39–49 (KSGGRNNNGRI) the composition is skewed to polar residues. Basic and acidic residues predominate over residues 229-239 (DHPHGGGEGRN). Residues 253–273 (KGFKTRKNKRTDKYIVRRRNK) are compositionally biased toward basic residues.

This sequence belongs to the universal ribosomal protein uL2 family. As to quaternary structure, part of the 50S ribosomal subunit. Forms a bridge to the 30S subunit in the 70S ribosome.

In terms of biological role, one of the primary rRNA binding proteins. Required for association of the 30S and 50S subunits to form the 70S ribosome, for tRNA binding and peptide bond formation. It has been suggested to have peptidyltransferase activity; this is somewhat controversial. Makes several contacts with the 16S rRNA in the 70S ribosome. The polypeptide is Large ribosomal subunit protein uL2 (Aeromonas salmonicida (strain A449)).